The sequence spans 965 residues: 26S proteasome non-ATPase regulatory subunit 1 (965 aa).

PC repeat units lie at residues 380–413, 418–452, 454–488, 489–523, 560–595, 630–664, 665–706, and 708–738; these read NAVASLGLIHHGQESSAMKVLEPYLPKESVEGFG, GAMLAYGLIHAKHGDATAMSTLAQWLKTAENEPVR, GACLGFGVAGLGSSSVSNYEKVREVLQRDEAVSGE, SAGIAMGLIMAGHLNQEVFNELKQYTVDTQHDKTQ, TGICMLSMAYAGTGSPDVVRRLLEKVATDPNLDVKR, GAAMALGIACAGTGNMEAIALIEPMISDKEGFVRK, GALL…SLVK, and GAIIAQGLLDIGGQNAAVTMQNSDKQPDMGS. Positions 836-856 are enriched in low complexity; that stretch reads ASASSAAAAPSSSSTSGTAPA. Disordered stretches follow at residues 836 to 889 and 943 to 965; these read ASAS…LQNP and TPASSGNTENKPHSTFEININDF. The span at 863–882 shows a compositional bias: basic and acidic residues; it reads EVDQPGKSKKEKAPEKDTKP.

Belongs to the proteasome subunit S1 family.

Acts as a regulatory subunit of the 26 proteasome which is involved in the ATP-dependent degradation of ubiquitinated proteins. This Caenorhabditis elegans protein is 26S proteasome non-ATPase regulatory subunit 1 (rpn-2).